Reading from the N-terminus, the 541-residue chain is Chaperonin GroEL (541 aa).

Residues T29–P32, D86–T90, G413, N476–A478, and D492 contribute to the ATP site. The interval K521–M541 is disordered. The span at N525 to P535 shows a compositional bias: low complexity.

Belongs to the chaperonin (HSP60) family. In terms of assembly, forms a cylinder of 14 subunits composed of two heptameric rings stacked back-to-back. Interacts with the co-chaperonin GroES.

The protein resides in the cytoplasm. The enzyme catalyses ATP + H2O + a folded polypeptide = ADP + phosphate + an unfolded polypeptide.. Functionally, together with its co-chaperonin GroES, plays an essential role in assisting protein folding. The GroEL-GroES system forms a nano-cage that allows encapsulation of the non-native substrate proteins and provides a physical environment optimized to promote and accelerate protein folding. This Lactiplantibacillus plantarum (strain ATCC BAA-793 / NCIMB 8826 / WCFS1) (Lactobacillus plantarum) protein is Chaperonin GroEL.